The sequence spans 306 residues: Ribosomal protein L11 methyltransferase (306 aa).

S-adenosyl-L-methionine-binding residues include Thr139, Gly173, Asp195, and Asn242.

Belongs to the methyltransferase superfamily. PrmA family.

Its subcellular location is the cytoplasm. The catalysed reaction is L-lysyl-[protein] + 3 S-adenosyl-L-methionine = N(6),N(6),N(6)-trimethyl-L-lysyl-[protein] + 3 S-adenosyl-L-homocysteine + 3 H(+). Its function is as follows. Methylates ribosomal protein L11. In Nostoc sp. (strain PCC 7120 / SAG 25.82 / UTEX 2576), this protein is Ribosomal protein L11 methyltransferase.